The sequence spans 255 residues: 4-hydroxy-tetrahydrodipicolinate reductase (255 aa).

Residues 8-13, 88-90, and 112-115 each bind NAD(+); these read GANGRV, GTT, and ATNM. The active-site Proton donor/acceptor is His144. His145 provides a ligand contact to (S)-2,3,4,5-tetrahydrodipicolinate. The active-site Proton donor is Lys148. Position 154–155 (154–155) interacts with (S)-2,3,4,5-tetrahydrodipicolinate; sequence GT.

Belongs to the DapB family.

The protein resides in the cytoplasm. It carries out the reaction (S)-2,3,4,5-tetrahydrodipicolinate + NAD(+) + H2O = (2S,4S)-4-hydroxy-2,3,4,5-tetrahydrodipicolinate + NADH + H(+). It catalyses the reaction (S)-2,3,4,5-tetrahydrodipicolinate + NADP(+) + H2O = (2S,4S)-4-hydroxy-2,3,4,5-tetrahydrodipicolinate + NADPH + H(+). The protein operates within amino-acid biosynthesis; L-lysine biosynthesis via DAP pathway; (S)-tetrahydrodipicolinate from L-aspartate: step 4/4. Catalyzes the conversion of 4-hydroxy-tetrahydrodipicolinate (HTPA) to tetrahydrodipicolinate. The protein is 4-hydroxy-tetrahydrodipicolinate reductase of Sulfurimonas denitrificans (strain ATCC 33889 / DSM 1251) (Thiomicrospira denitrificans (strain ATCC 33889 / DSM 1251)).